We begin with the raw amino-acid sequence, 329 residues long: DNA-directed RNA polymerase subunit alpha (329 aa).

The tract at residues Met1–Arg235 is alpha N-terminal domain (alpha-NTD). The tract at residues Phe249–Asp329 is alpha C-terminal domain (alpha-CTD).

Belongs to the RNA polymerase alpha chain family. In terms of assembly, homodimer. The RNAP catalytic core consists of 2 alpha, 1 beta, 1 beta' and 1 omega subunit. When a sigma factor is associated with the core the holoenzyme is formed, which can initiate transcription.

The catalysed reaction is RNA(n) + a ribonucleoside 5'-triphosphate = RNA(n+1) + diphosphate. DNA-dependent RNA polymerase catalyzes the transcription of DNA into RNA using the four ribonucleoside triphosphates as substrates. The sequence is that of DNA-directed RNA polymerase subunit alpha from Haemophilus ducreyi (strain 35000HP / ATCC 700724).